We begin with the raw amino-acid sequence, 431 residues long: Galanin-like G-protein coupled receptor npr-9 (431 aa).

The Extracellular portion of the chain corresponds to 1-34 (MEFENLTKEEMEQLQKIYDDTISFERKIGIIIPT). N5 carries N-linked (GlcNAc...) asparagine glycosylation. The chain crosses the membrane as a helical span at residues 35 to 55 (IFAVIILVGLVGNALVVIVAF). At 56–66 (GRQMRNSTNTL) the chain is on the cytoplasmic side. Residues 67–87 (IIGLAISDLMFLLLCVPFTAV) form a helical membrane-spanning segment. Residues 88-101 (DYAAPTWIFPEWTC) are Extracellular-facing. A disulfide bridge connects residues C101 and C182. The helical transmembrane segment at 102-124 (SMINFFQHTSAYCSVWTLTLMAL) threads the bilayer. The Cytoplasmic segment spans residues 125–143 (DRYLAVVYPVESMTLRTPR). Residues 144-164 (NTVIALCFIYIIIIASQIPVG) traverse the membrane as a helical segment. Residues 165 to 203 (RMHGIYVYDFIMEKRSTCAILTIATAEATPTMARTYFMT) are Extracellular-facing. The chain crosses the membrane as a helical span at residues 204–224 (FNVFGYVLPLGISVVLYGLML). The Cytoplasmic segment spans residues 225–268 (RKLWDMPRPGNSQSVGGRNLTNRDSGSSIRRRPEATAAKRKVTR). Residues 235–252 (NSQSVGGRNLTNRDSGSS) are compositionally biased toward polar residues. The disordered stretch occupies residues 235–257 (NSQSVGGRNLTNRDSGSSIRRRP). A helical membrane pass occupies residues 269–289 (LVLCVLITWALCWLPLNVCFF). The Extracellular segment spans residues 290–298 (MSGLAYPEP). A helical transmembrane segment spans residues 299–319 (LVISHGVIMVIVQIASQVLAY). Topologically, residues 320–431 (TNSCLNPILY…RSKSTRSYNL (112 aa)) are cytoplasmic. Positions 393-414 (SLLKDNSSSATSVQPLRTSIQA) are enriched in polar residues. The disordered stretch occupies residues 393-431 (SLLKDNSSSATSVQPLRTSIQAKKTKNIGRSKSTRSYNL). Over residues 415–425 (KKTKNIGRSKS) the composition is skewed to basic residues.

Belongs to the G-protein coupled receptor 1 family. In terms of tissue distribution, exclusively expressed in the AIB interneuron.

The protein resides in the cell membrane. Neuropeptide that controls movement such as roaming, foraging and backwards locomotion or 'reversals' in response to environmental cues such as food availability or volatile odorants such as octanol. Antagonizes AIB interneuron activity to control bacterial colonization and may negatively regulate the expression of immunity-related genes such as pqm-1 and dod-22 in response to infection by P.aeruginosa. The sequence is that of Galanin-like G-protein coupled receptor npr-9 from Caenorhabditis elegans.